Here is a 492-residue protein sequence, read N- to C-terminus: 6-phosphogluconate dehydrogenase, decarboxylating (492 aa).

NADP(+)-binding positions include 13–18 (GLAVMG), 36–38 (NRT), 78–80 (VKA), and asparagine 106. Residue asparagine 106 coordinates substrate. Serine 107 is modified (phosphoserine). 132-134 (SGG) lines the substrate pocket. Residue lysine 187 is the Proton acceptor of the active site. 190–191 (HN) is a binding site for substrate. Glutamate 194 acts as the Proton donor in catalysis. Tyrosine 195 is a binding site for substrate. Serine 215 is modified (phosphoserine). Substrate contacts are provided by lysine 264, arginine 291, arginine 449, and histidine 455.

Belongs to the 6-phosphogluconate dehydrogenase family. Homodimer.

It catalyses the reaction 6-phospho-D-gluconate + NADP(+) = D-ribulose 5-phosphate + CO2 + NADPH. It participates in carbohydrate degradation; pentose phosphate pathway; D-ribulose 5-phosphate from D-glucose 6-phosphate (oxidative stage): step 3/3. Its function is as follows. Catalyzes the oxidative decarboxylation of 6-phosphogluconate to ribulose 5-phosphate and CO(2), with concomitant reduction of NADP to NADPH. The chain is 6-phosphogluconate dehydrogenase, decarboxylating from Schizosaccharomyces pombe (strain 972 / ATCC 24843) (Fission yeast).